The primary structure comprises 43 residues: Protein PsbN (43 aa).

The helical transmembrane segment at 5–27 (TLVAIFISGSLVSFTGYALYTAF) threads the bilayer.

It belongs to the PsbN family.

Its subcellular location is the plastid. It localises to the chloroplast thylakoid membrane. In terms of biological role, may play a role in photosystem I and II biogenesis. The protein is Protein PsbN of Nelumbo lutea (American lotus).